Reading from the N-terminus, the 301-residue chain is Diaminopimelate epimerase (301 aa).

3 residues coordinate substrate: asparagine 15, glutamine 47, and asparagine 67. The active-site Proton donor is the cysteine 76. Residues 77 to 78 (GN), asparagine 163, asparagine 197, and 215 to 216 (ER) each bind substrate. The active-site Proton acceptor is the cysteine 224. 225–226 (GS) contacts substrate.

It belongs to the diaminopimelate epimerase family. Homodimer.

The protein resides in the cytoplasm. It carries out the reaction (2S,6S)-2,6-diaminopimelate = meso-2,6-diaminopimelate. Its pathway is amino-acid biosynthesis; L-lysine biosynthesis via DAP pathway; DL-2,6-diaminopimelate from LL-2,6-diaminopimelate: step 1/1. Catalyzes the stereoinversion of LL-2,6-diaminopimelate (L,L-DAP) to meso-diaminopimelate (meso-DAP), a precursor of L-lysine and an essential component of the bacterial peptidoglycan. This Rhizobium rhizogenes (strain K84 / ATCC BAA-868) (Agrobacterium radiobacter) protein is Diaminopimelate epimerase.